The primary structure comprises 83 residues: MSGPNGDLGMPVDAGTEGENDSFGEAEYAAINSMLDQINSCLDHLEEKNDHLHARLQELLESNRQTRLEFQQQLGEAPGDASP.

The interval 1 to 25 (MSGPNGDLGMPVDAGTEGENDSFGE) is disordered. Positions 25-74 (EAEYAAINSMLDQINSCLDHLEEKNDHLHARLQELLESNRQTRLEFQQQL) form a coiled coil. The residue at position 82 (Ser82) is a Phosphoserine.

This sequence belongs to the UPF0184 (EST00098) family.

The protein resides in the cell junction. The protein localises to the cytoplasm. Its subcellular location is the cytoskeleton. Its function is as follows. Essential for intermediate filament organization in intestinal cells, interacts with intermediate filament and regulates intestinal lumen morphology. The chain is Bublin coiled-coil protein from Mus musculus (Mouse).